A 292-amino-acid polypeptide reads, in one-letter code: 33 kDa chaperonin (292 aa).

Disulfide bonds link Cys-238–Cys-240 and Cys-271–Cys-274.

The protein belongs to the HSP33 family. Under oxidizing conditions two disulfide bonds are formed involving the reactive cysteines. Under reducing conditions zinc is bound to the reactive cysteines and the protein is inactive.

The protein resides in the cytoplasm. In terms of biological role, redox regulated molecular chaperone. Protects both thermally unfolding and oxidatively damaged proteins from irreversible aggregation. Plays an important role in the bacterial defense system toward oxidative stress. This is 33 kDa chaperonin from Alkaliphilus metalliredigens (strain QYMF).